The sequence spans 870 residues: Serine protease DegP homolog (870 aa).

Residues 1–29 (MDIIFCTPTYCKIMLMIIMLISLRTRCDT) form the signal peptide. The tract at residues 128-151 (KNPLNDNFKNPKLRKHSPNNKKNK) is disordered. A compositionally biased stretch (basic residues) spans 138–151 (PKLRKHSPNNKKNK). Residues histidine 328, aspartate 359, and serine 437 each act as charge relay system in the active site.

The protein belongs to the peptidase S1C family. In terms of assembly, oligomer; may form trimers or hexamers. Forms a complex at least composed of DegP, ENO and HSP70.

It is found in the cytoplasm. The protein resides in the parasitophorous vacuole. The protein localises to the host cell membrane. Its subcellular location is the host cytoplasm. Functionally, serine protease which also acts as a protein chaperone. Plays a role in the parasite development in host erythrocytes possibly by protecting it against thermal and oxidative stresses. The protein is Serine protease DegP homolog of Plasmodium falciparum (isolate 3D7).